The primary structure comprises 166 residues: NADH-quinone oxidoreductase subunit C (166 aa).

It belongs to the complex I 30 kDa subunit family. In terms of assembly, NDH-1 is composed of 14 different subunits. Subunits NuoB, C, D, E, F, and G constitute the peripheral sector of the complex.

Its subcellular location is the cell inner membrane. The enzyme catalyses a quinone + NADH + 5 H(+)(in) = a quinol + NAD(+) + 4 H(+)(out). Its function is as follows. NDH-1 shuttles electrons from NADH, via FMN and iron-sulfur (Fe-S) centers, to quinones in the respiratory chain. The immediate electron acceptor for the enzyme in this species is believed to be a menaquinone. Couples the redox reaction to proton translocation (for every two electrons transferred, four hydrogen ions are translocated across the cytoplasmic membrane), and thus conserves the redox energy in a proton gradient. The protein is NADH-quinone oxidoreductase subunit C of Chlorobium phaeobacteroides (strain DSM 266 / SMG 266 / 2430).